A 620-amino-acid chain; its full sequence is DNA primase (620 aa).

The CHC2-type zinc-finger motif lies at 38-62; the sequence is CPFHADQNPSMTVSVAKNIFKCFSC. Residues 266-350 form the Toprim domain; that stretch reads LKLYLVEGYF…IVEVVDWNQA (85 aa). Residues glutamate 272, aspartate 319, and aspartate 321 each coordinate Mg(2+).

It belongs to the DnaG primase family. As to quaternary structure, monomer. Interacts with DnaB. Zn(2+) is required as a cofactor. The cofactor is Mg(2+).

The enzyme catalyses ssDNA + n NTP = ssDNA/pppN(pN)n-1 hybrid + (n-1) diphosphate.. RNA polymerase that catalyzes the synthesis of short RNA molecules used as primers for DNA polymerase during DNA replication. The polypeptide is DNA primase (Mycoplasma pneumoniae (strain ATCC 29342 / M129 / Subtype 1) (Mycoplasmoides pneumoniae)).